Consider the following 336-residue polypeptide: Ribosomal RNA large subunit methyltransferase F (336 aa).

It belongs to the methyltransferase superfamily. METTL16/RlmF family.

The protein resides in the cytoplasm. It catalyses the reaction adenosine(1618) in 23S rRNA + S-adenosyl-L-methionine = N(6)-methyladenosine(1618) in 23S rRNA + S-adenosyl-L-homocysteine + H(+). In terms of biological role, specifically methylates the adenine in position 1618 of 23S rRNA. The sequence is that of Ribosomal RNA large subunit methyltransferase F from Yersinia pestis (strain Pestoides F).